Reading from the N-terminus, the 123-residue chain is Small ribosomal subunit protein uS12 (123 aa).

D89 is subject to 3-methylthioaspartic acid. A disordered region spans residues 104 to 123 (TQGVKDRRQRRSKYGAKRPK). Basic residues predominate over residues 110–123 (RRQRRSKYGAKRPK).

The protein belongs to the universal ribosomal protein uS12 family. As to quaternary structure, part of the 30S ribosomal subunit. Contacts proteins S8 and S17. May interact with IF1 in the 30S initiation complex.

In terms of biological role, with S4 and S5 plays an important role in translational accuracy. Functionally, interacts with and stabilizes bases of the 16S rRNA that are involved in tRNA selection in the A site and with the mRNA backbone. Located at the interface of the 30S and 50S subunits, it traverses the body of the 30S subunit contacting proteins on the other side and probably holding the rRNA structure together. The combined cluster of proteins S8, S12 and S17 appears to hold together the shoulder and platform of the 30S subunit. This Rhodospirillum rubrum (strain ATCC 11170 / ATH 1.1.1 / DSM 467 / LMG 4362 / NCIMB 8255 / S1) protein is Small ribosomal subunit protein uS12.